A 178-amino-acid polypeptide reads, in one-letter code: MSPPSQLCLLTIVALILPSEGQTPEKPRSSFTAHQSSVTTHVPVPDQTSPGVQTTPPIWTSEAGEATGSQTAAKTKTQQLTEMATANPVTDPGPLTSSEKGTPALSRIKSPSPPKGYMPPSYIENPLDPNENSPFYYDNTTLRKRGLLVAAVLFITGIIILTSGKCRQFSQLCLNRHR.

The N-terminal stretch at 1–21 (MSPPSQLCLLTIVALILPSEG) is a signal peptide. The tract at residues 21–126 (GQTPEKPRSS…YMPPSYIENP (106 aa)) is disordered. Residues 22-146 (QTPEKPRSSF…YDNTTLRKRG (125 aa)) are Extracellular-facing. The segment covering 29-58 (SSFTAHQSSVTTHVPVPDQTSPGVQTTPPI) has biased composition (polar residues). Low complexity predominate over residues 70–79 (QTAAKTKTQQ). A helical membrane pass occupies residues 147–164 (LLVAAVLFITGIIILTSG). The Cytoplasmic segment spans residues 165–178 (KCRQFSQLCLNRHR).

It belongs to the FXYD family. Regulatory subunit of the sodium/potassium-transporting ATPase which is composed of a catalytic alpha subunit, a non-catalytic beta subunit and an additional regulatory subunit. The regulatory subunit, a member of the FXYD protein family, modulates the enzymatic activity in a tissue- and isoform-specific way by changing affinities of the Na+/K+-ATPase toward Na(+), K(+) or ATP. Post-translationally, glycosylated. In terms of tissue distribution, spleen, lung, skeletal muscle, and testis.

The protein localises to the cell membrane. Its subcellular location is the basolateral cell membrane. Associates with and regulates the activity of the sodium/potassium-transporting ATPase (NKA) which catalyzes the hydrolysis of ATP coupled with the exchange of Na(+) and K(+) ions across the plasma membrane. May increase NKA activity by increasing the apparent affinity for Na(+). Involved in down-regulation of E-cadherin which results in reduced cell adhesion. Promotes metastasis. The protein is FXYD domain-containing ion transport regulator 5 (Fxyd5) of Rattus norvegicus (Rat).